Here is a 412-residue protein sequence, read N- to C-terminus: 23S rRNA (uracil(747)-C(5))-methyltransferase (412 aa).

[4Fe-4S] cluster is bound by residues Cys63, Cys69, Cys72, and Cys139. Residues Gln255, Tyr281, Glu302, and Asp343 each coordinate S-adenosyl-L-methionine. The active-site Nucleophile is the Cys369.

This sequence belongs to the class I-like SAM-binding methyltransferase superfamily. RNA M5U methyltransferase family.

It carries out the reaction uridine(747) in 23S rRNA + S-adenosyl-L-methionine = 5-methyluridine(747) in 23S rRNA + S-adenosyl-L-homocysteine + H(+). Its function is as follows. Catalyzes the formation of 5-methyl-uridine at position equivalent to 747 (m5U747) in 23S rRNA. In Pyrococcus horikoshii (strain ATCC 700860 / DSM 12428 / JCM 9974 / NBRC 100139 / OT-3), this protein is 23S rRNA (uracil(747)-C(5))-methyltransferase.